We begin with the raw amino-acid sequence, 436 residues long: ATP-dependent protease ATPase subunit HslU (436 aa).

Residues isoleucine 18, 60 to 65 (GVGKTE), aspartate 249, glutamate 314, and arginine 386 each bind ATP.

The protein belongs to the ClpX chaperone family. HslU subfamily. As to quaternary structure, a double ring-shaped homohexamer of HslV is capped on each side by a ring-shaped HslU homohexamer. The assembly of the HslU/HslV complex is dependent on binding of ATP.

Its subcellular location is the cytoplasm. ATPase subunit of a proteasome-like degradation complex; this subunit has chaperone activity. The binding of ATP and its subsequent hydrolysis by HslU are essential for unfolding of protein substrates subsequently hydrolyzed by HslV. HslU recognizes the N-terminal part of its protein substrates and unfolds these before they are guided to HslV for hydrolysis. The protein is ATP-dependent protease ATPase subunit HslU of Ruegeria sp. (strain TM1040) (Silicibacter sp.).